Here is a 487-residue protein sequence, read N- to C-terminus: NADH-quinone oxidoreductase subunit N (487 aa).

Helical transmembrane passes span 7–27 (LTLILPEIVMAISAMALILIT), 37–57 (LVSILAAATLGAAAVMVAPAL), 81–101 (FAKILIYLSAIGCLMIAPAFF), 112–132 (PVLVLLATLGMSIMVSAGDLI), 166–186 (FVLGALASGILLYGMSLVYGF), 207–227 (ALFGVIFVLAGLAFKIAAVPF), 237–257 (GAPTPVTTFFATAPKVAAVAL), 276–296 (IVIFAALASIVLGALGAIGQT), 307–327 (INNVGFILIGLAASTVAGLSA), 329–349 (LTYLAIYVVMALGSFVALLML), 373–393 (LAWCLLFLMFSLAGIPPLLGF), 407–427 (DMVLLAALGIAASVIGAFYYI), and 452–472 (VLLILAAVVVSPLGYLLTGWL).

Belongs to the complex I subunit 2 family. In terms of assembly, NDH-1 is composed of 14 different subunits. Subunits NuoA, H, J, K, L, M, N constitute the membrane sector of the complex.

It is found in the cell inner membrane. It carries out the reaction a quinone + NADH + 5 H(+)(in) = a quinol + NAD(+) + 4 H(+)(out). In terms of biological role, NDH-1 shuttles electrons from NADH, via FMN and iron-sulfur (Fe-S) centers, to quinones in the respiratory chain. The immediate electron acceptor for the enzyme in this species is believed to be ubiquinone. Couples the redox reaction to proton translocation (for every two electrons transferred, four hydrogen ions are translocated across the cytoplasmic membrane), and thus conserves the redox energy in a proton gradient. The sequence is that of NADH-quinone oxidoreductase subunit N from Erythrobacter litoralis (strain HTCC2594).